The following is a 208-amino-acid chain: V-type ATP synthase subunit D (208 aa).

It belongs to the V-ATPase D subunit family.

Functionally, produces ATP from ADP in the presence of a proton gradient across the membrane. The chain is V-type ATP synthase subunit D from Streptococcus pyogenes serotype M3 (strain ATCC BAA-595 / MGAS315).